The chain runs to 231 residues: Ribonuclease P protein component 3 (231 aa).

The protein belongs to the eukaryotic/archaeal RNase P protein component 3 family. As to quaternary structure, consists of a catalytic RNA component and at least 4-5 protein subunits.

It localises to the cytoplasm. It carries out the reaction Endonucleolytic cleavage of RNA, removing 5'-extranucleotides from tRNA precursor.. Part of ribonuclease P, a protein complex that generates mature tRNA molecules by cleaving their 5'-ends. This chain is Ribonuclease P protein component 3, found in Methanococcus vannielii (strain ATCC 35089 / DSM 1224 / JCM 13029 / OCM 148 / SB).